A 174-amino-acid polypeptide reads, in one-letter code: Adenylate kinase (174 aa).

The tract at residues 12–41 (STGDMLRAAIKAGTPLGLEAKKIIDEGGLV) is NMP. AMP-binding positions include Thr-13, Arg-18, 39-41 (GLV), 67-70 (GFPR), and Gln-74. The interval 104–141 (GRRVHLASGRTYHVTYNPPKVEGKDDVTGEDLIQRDDD) is LID. Residues Arg-105 and 114 to 115 (TY) contribute to the ATP site. AMP-binding residues include Arg-138 and Arg-149.

This sequence belongs to the adenylate kinase family. As to quaternary structure, monomer.

The protein localises to the cytoplasm. It catalyses the reaction AMP + ATP = 2 ADP. It functions in the pathway purine metabolism; AMP biosynthesis via salvage pathway; AMP from ADP: step 1/1. Functionally, catalyzes the reversible transfer of the terminal phosphate group between ATP and AMP. Plays an important role in cellular energy homeostasis and in adenine nucleotide metabolism. The sequence is that of Adenylate kinase from Neisseria lactamica.